The following is a 315-amino-acid chain: Probable cell division protein WhiA (315 aa).

Residues 274-308 constitute a DNA-binding region (H-T-H motif); sequence SLKNLGELIPGGPISKSGINHRLRKLNEIAEKIRA.

The protein belongs to the WhiA family.

Functionally, involved in cell division and chromosome segregation. This Ligilactobacillus salivarius (strain UCC118) (Lactobacillus salivarius) protein is Probable cell division protein WhiA.